The chain runs to 509 residues: 2,3-bisphosphoglycerate-independent phosphoglycerate mutase (509 aa).

Mn(2+) contacts are provided by D12 and S62. S62 (phosphoserine intermediate) is an active-site residue. Residues H123, 153–154 (RD), R185, R191, 260–263 (RPDR), and K333 contribute to the substrate site. The Mn(2+) site is built by D400, H404, D441, H442, and H460.

The protein belongs to the BPG-independent phosphoglycerate mutase family. As to quaternary structure, monomer. Mn(2+) is required as a cofactor.

It carries out the reaction (2R)-2-phosphoglycerate = (2R)-3-phosphoglycerate. It participates in carbohydrate degradation; glycolysis; pyruvate from D-glyceraldehyde 3-phosphate: step 3/5. Its function is as follows. Catalyzes the interconversion of 2-phosphoglycerate and 3-phosphoglycerate. The chain is 2,3-bisphosphoglycerate-independent phosphoglycerate mutase from Clostridium kluyveri (strain ATCC 8527 / DSM 555 / NBRC 12016 / NCIMB 10680 / K1).